A 152-amino-acid polypeptide reads, in one-letter code: Nucleoside diphosphate kinase (152 aa).

ATP contacts are provided by K11, F59, R87, T93, R104, and N114. The Pros-phosphohistidine intermediate role is filled by H117.

This sequence belongs to the NDK family. Homotetramer. It depends on Mg(2+) as a cofactor.

Its subcellular location is the cytoplasm. It catalyses the reaction a 2'-deoxyribonucleoside 5'-diphosphate + ATP = a 2'-deoxyribonucleoside 5'-triphosphate + ADP. The enzyme catalyses a ribonucleoside 5'-diphosphate + ATP = a ribonucleoside 5'-triphosphate + ADP. Its function is as follows. Major role in the synthesis of nucleoside triphosphates other than ATP. The ATP gamma phosphate is transferred to the NDP beta phosphate via a ping-pong mechanism, using a phosphorylated active-site intermediate. This is Nucleoside diphosphate kinase from Prochlorococcus marinus (strain MIT 9215).